The following is a 493-amino-acid chain: Glutamyl-tRNA(Gln) amidotransferase subunit A (493 aa).

Catalysis depends on charge relay system residues Lys78 and Ser158. Ser182 (acyl-ester intermediate) is an active-site residue.

It belongs to the amidase family. GatA subfamily. As to quaternary structure, heterotrimer of A, B and C subunits.

The enzyme catalyses L-glutamyl-tRNA(Gln) + L-glutamine + ATP + H2O = L-glutaminyl-tRNA(Gln) + L-glutamate + ADP + phosphate + H(+). Allows the formation of correctly charged Gln-tRNA(Gln) through the transamidation of misacylated Glu-tRNA(Gln) in organisms which lack glutaminyl-tRNA synthetase. The reaction takes place in the presence of glutamine and ATP through an activated gamma-phospho-Glu-tRNA(Gln). In Rickettsia bellii (strain OSU 85-389), this protein is Glutamyl-tRNA(Gln) amidotransferase subunit A.